Here is a 29-residue protein sequence, read N- to C-terminus: Glucagon (29 aa).

The protein belongs to the glucagon family.

The protein resides in the secreted. Its function is as follows. Glucagon plays a key role in glucose metabolism and homeostasis. Regulates blood glucose by increasing gluconeogenesis and decreasing glycolysis. In Polypterus senegalus (Senegal bichir), this protein is Glucagon (gcg).